Consider the following 89-residue polypeptide: Small ribosomal subunit protein uS15 (89 aa).

This sequence belongs to the universal ribosomal protein uS15 family. As to quaternary structure, part of the 30S ribosomal subunit. Forms a bridge to the 50S subunit in the 70S ribosome, contacting the 23S rRNA.

Functionally, one of the primary rRNA binding proteins, it binds directly to 16S rRNA where it helps nucleate assembly of the platform of the 30S subunit by binding and bridging several RNA helices of the 16S rRNA. In terms of biological role, forms an intersubunit bridge (bridge B4) with the 23S rRNA of the 50S subunit in the ribosome. This is Small ribosomal subunit protein uS15 from Pseudomonas savastanoi pv. phaseolicola (strain 1448A / Race 6) (Pseudomonas syringae pv. phaseolicola (strain 1448A / Race 6)).